The chain runs to 501 residues: UDP-N-acetylmuramoyl-L-alanyl-D-glutamate--2,6-diaminopimelate ligase (501 aa).

Residues Leu-26, Ser-28, and 43–45 (HQC) each bind UDP-N-acetyl-alpha-D-muramoyl-L-alanyl-D-glutamate. 123–129 (GTNGKTT) lines the ATP pocket. Residues Asn-164, 165 to 166 (TT), Ser-192, Gln-198, and Arg-200 contribute to the UDP-N-acetyl-alpha-D-muramoyl-L-alanyl-D-glutamate site. The residue at position 232 (Lys-232) is an N6-carboxylysine. Residues Arg-398, 422–425 (DNPR), Gly-473, and Glu-477 each bind meso-2,6-diaminopimelate. The short motif at 422–425 (DNPR) is the Meso-diaminopimelate recognition motif element.

It belongs to the MurCDEF family. MurE subfamily. Requires Mg(2+) as cofactor. Post-translationally, carboxylation is probably crucial for Mg(2+) binding and, consequently, for the gamma-phosphate positioning of ATP.

The protein localises to the cytoplasm. It carries out the reaction UDP-N-acetyl-alpha-D-muramoyl-L-alanyl-D-glutamate + meso-2,6-diaminopimelate + ATP = UDP-N-acetyl-alpha-D-muramoyl-L-alanyl-gamma-D-glutamyl-meso-2,6-diaminopimelate + ADP + phosphate + H(+). It participates in cell wall biogenesis; peptidoglycan biosynthesis. Functionally, catalyzes the addition of meso-diaminopimelic acid to the nucleotide precursor UDP-N-acetylmuramoyl-L-alanyl-D-glutamate (UMAG) in the biosynthesis of bacterial cell-wall peptidoglycan. The polypeptide is UDP-N-acetylmuramoyl-L-alanyl-D-glutamate--2,6-diaminopimelate ligase (Haemophilus ducreyi (strain 35000HP / ATCC 700724)).